A 291-amino-acid polypeptide reads, in one-letter code: N-acetylmannosamine kinase (291 aa).

ATP contacts are provided by residues 5 to 12 (AIDIGGTK) and 132 to 139 (GVGGGVVS). The Zn(2+) site is built by His156, Cys166, Cys168, and Cys173.

It belongs to the ROK (NagC/XylR) family. NanK subfamily. Homodimer.

The enzyme catalyses an N-acyl-D-mannosamine + ATP = an N-acyl-D-mannosamine 6-phosphate + ADP + H(+). Its pathway is amino-sugar metabolism; N-acetylneuraminate degradation; D-fructose 6-phosphate from N-acetylneuraminate: step 2/5. Its function is as follows. Catalyzes the phosphorylation of N-acetylmannosamine (ManNAc) to ManNAc-6-P. The chain is N-acetylmannosamine kinase (nanK1) from Escherichia coli O6:H1 (strain CFT073 / ATCC 700928 / UPEC).